Reading from the N-terminus, the 528-residue chain is MAVLRTMKLKERLVISLGATLVLLTLLLIVDVQMDFGVANRHLLQQQHQKIRLGNDYDGGTGGGGMLHEFKRKFLQKSNASGSKEASTQAGASQSGGATSGQDAAAGASGGAAGPGTSRSTSTRKPTPHDRYADLQKHLLSDEYSHVIVDNAPDVSRDNPTLAEMLHRKASANASNLERFQLRITKKELYGEQDTLVDAVLRDMIKLPIQHVVQKEGGTQLKLIIEYPNDIKALMKPMRFPREQQTLPNHFYFTDYERHNAEIAAFHLDRILGFRRAMPVAGRTLNITTEIYQLAEENLLKTFFVSPSLNLCFHGKCSYYCDTSHAICGNPDMLEGSFAAFLPNFESGNRKLWRHPWRRSYHKRKKAQWETDANYCALVRDIPPYDDGRRLYDLMDMAVFDFLTGNMDRHHYETFKVYGNETFPLHLDHGRGFGRPFHDELSILAPVLQCCLIRKSTLVKLLDFHNGPKPLSQLMSESLSQDPVSPVLWQPHLEALDRRTGIILQSIRDCIKRNPPGDVDGSETDVSS.

Over 1-12 (MAVLRTMKLKER) the chain is Cytoplasmic. Positions 1–76 (MAVLRTMKLK…LHEFKRKFLQ (76 aa)) are excised as a propeptide. Residues 13 to 33 (LVISLGATLVLLTLLLIVDVQ) form a helical membrane-spanning segment. Residues 34 to 528 (MDFGVANRHL…VDGSETDVSS (495 aa)) are Lumenal-facing. Residues 77 to 130 (KSNASGSKEASTQAGASQSGGATSGQDAAAGASGGAAGPGTSRSTSTRKPTPHD) are disordered. Asn79 carries N-linked (GlcNAc...) asparagine glycosylation. Residues 86–107 (ASTQAGASQSGGATSGQDAAAG) are compositionally biased toward low complexity. Asn173 carries an N-linked (GlcNAc...) asparagine glycan. ATP is bound by residues Gln220, Lys236, and Glu257. Glu257 provides a ligand contact to Mn(2+). An N-linked (GlcNAc...) asparagine glycan is attached at Asn286. Disulfide bonds link Cys312–Cys328 and Cys317–Cys321. Residue 339-342 (AAFL) participates in ATP binding. 2 cysteine pairs are disulfide-bonded: Cys376–Cys450 and Cys451–Cys510. Residue Asp408 is part of the active site. An ATP-binding site is contributed by Glu413. Residue Asn420 is glycosylated (N-linked (GlcNAc...) asparagine). Residue Asp428 coordinates ATP. Residue Asp428 coordinates Mn(2+).

This sequence belongs to the FAM20 family. Mn(2+) is required as a cofactor. As to expression, in embryos, prominently expressed in midline glia, salivary gland, intestine and dorsal vessel (heart). Not associated with biomineralization.

The protein localises to the golgi apparatus membrane. It is found in the secreted. The enzyme catalyses L-seryl-[protein] + ATP = O-phospho-L-seryl-[protein] + ADP + H(+). It carries out the reaction L-threonyl-[protein] + ATP = O-phospho-L-threonyl-[protein] + ADP + H(+). In terms of biological role, golgi serine/threonine protein kinase that phosphorylates secretory pathway proteins within Ser-x-Glu/pSer motifs. The polypeptide is Extracellular serine/threonine protein CG31145 (Drosophila melanogaster (Fruit fly)).